The chain runs to 196 residues: uncharacterized protein (196 aa).

The disordered stretch occupies residues 1–21 (MQPEVEPLISPNLGAPGSHRE).

This is an uncharacterized protein from Mus musculus (Mouse).